The primary structure comprises 203 residues: Ribonuclease HII (203 aa).

The RNase H type-2 domain occupies 16–203 (ENIACCDEVG…HRKSFLNKIL (188 aa)). The a divalent metal cation site is built by Asp-22, Glu-23, and Asp-120.

Belongs to the RNase HII family. The cofactor is Mn(2+). Requires Mg(2+) as cofactor.

It localises to the cytoplasm. It catalyses the reaction Endonucleolytic cleavage to 5'-phosphomonoester.. Its function is as follows. Endonuclease that specifically degrades the RNA of RNA-DNA hybrids. The chain is Ribonuclease HII from Alkaliphilus oremlandii (strain OhILAs) (Clostridium oremlandii (strain OhILAs)).